A 120-amino-acid chain; its full sequence is Piercer of microtubule wall 2 protein (120 aa).

Positions 1 to 10 (MTECDWEKKS) are enriched in basic and acidic residues. The segment at 1–25 (MTECDWEKKSTSASNSDTEMKPELP) is disordered.

The protein belongs to the PIERCE2 family. In terms of assembly, microtubule inner protein component of sperm flagellar doublet microtubules. Interacts with CFAP53, ODAD1 and ODAD3; the interactions link the outer dynein arms docking complex (ODA-DC) to the internal microtubule inner proteins (MIP) in cilium axoneme. In terms of tissue distribution, expressed in trachea multiciliated cells.

It localises to the cytoplasm. The protein localises to the cytoskeleton. Its subcellular location is the cilium axoneme. The protein resides in the flagellum axoneme. Microtubule inner protein involved in the attachment of outer dynein arms (ODAs) to dynein-decorated doublet microtubules (DMTs) in cilia axoneme, which is required for motile cilia beating. The protein is Piercer of microtubule wall 2 protein (PIERCE2) of Bos taurus (Bovine).